Reading from the N-terminus, the 36-residue chain is AVDCNTVKSDLVGCVGYLPSGTGNPTPQCCDGVVKL.

This sequence belongs to the plant LTP family. Phosphorylated by Ca(2+)-dependent protein kinase.

Its function is as follows. Plant non-specific lipid-transfer proteins transfer phospholipids as well as galactolipids across membranes. May play a role in wax or cutin deposition in the cell walls of expanding epidermal cells and certain secretory tissues. The protein is Probable non-specific lipid-transfer protein of Pinus pinea (Italian stone pine).